Here is a 562-residue protein sequence, read N- to C-terminus: Serine/threonine-protein kinase STN7, chloroplastic (562 aa).

The N-terminal 45 residues, 1–45 (MATISPGGAYIGTPSPFLGKKLKPFSLTSPILSFKPTVKLNSSCR), are a transit peptide targeting the chloroplast. Residues 134–452 (FVVGKKLGEG…AKAALAHPYF (319 aa)) form the Protein kinase domain. Residues 140–148 (LGEGSFGVV) and K167 contribute to the ATP site. Catalysis depends on D279, which acts as the Proton acceptor. S526 carries the phosphoserine modification. Phosphothreonine occurs at positions 537 and 541.

It belongs to the protein kinase superfamily. Ser/Thr protein kinase family. Phosphorylated.

It localises to the plastid. It is found in the chloroplast thylakoid membrane. The catalysed reaction is L-seryl-[protein] + ATP = O-phospho-L-seryl-[protein] + ADP + H(+). It catalyses the reaction L-threonyl-[protein] + ATP = O-phospho-L-threonyl-[protein] + ADP + H(+). Serine/threonine protein kinase required for state transition by phosphorylating light-harvesting complex II outer antennae (LCHII). State transition plays a central role in response to environmental changes and allows to adjust to changing light conditions via the redistribution of light excitation energy between photosystem II (PSII) and photosystem I (PSI). Phosphorylates the minor light harvesting protein LHCB4.2/CP29 and is involved in the light-dependent phosphorylation of TSP9. Acts as a key component of the long-term response (LTR) signaling pathway. Mediates phosphorylation-dependent PTAC16 subcellular localization to regulate plastid gene expression. In Arabidopsis thaliana (Mouse-ear cress), this protein is Serine/threonine-protein kinase STN7, chloroplastic (STN7).